The following is a 559-amino-acid chain: Hepatocyte nuclear factor 1-beta-A (559 aa).

The interval 1–35 (MFANMVSKLTSLQQELLSALLDSGVTKDVLLQALE) is dimerization. Positions 5–36 (MVSKLTSLQQELLSALLDSGVTKDVLLQALED) constitute an HNF-p1 domain. A disordered region spans residues 53 to 98 (MSPSGSKLSDTDSKPVFHTLTNGHSKGKLSGDEGSEDGDDYDTPPI). The span at 85–94 (EGSEDGDDYD) shows a compositional bias: acidic residues. In terms of domain architecture, POU-specific atypical spans 100–195 (KELQSQNTEE…ILRQFNQATQ (96 aa)). The segment at residues 240 to 320 (LRRNRFKWGP…NRRKEEAFRQ (81 aa)) is a DNA-binding region (homeobox; HNF1-type). Low complexity-rich tracts occupy residues 334 to 354 (LNSL…SPPS) and 370 to 381 (TSSTTINHHSSN). The tract at residues 334 to 384 (LNSLLSHSSPHHPQTSSSPPSKMQGVRYSQQGPGEVTSSTTINHHSSNAMS) is disordered.

The protein belongs to the HNF1 homeobox family. Binds DNA as a dimer. Can form homodimer or heterodimer with HNF1-alpha. In terms of tissue distribution, during embryonic development, expressed dynamically in the developing hindbrain, kidney (pronephros), gut, liver and pancreas; expressed in both intermediate mesoderm (precursor to the kidney) and the caudal hindbrain (including rhombomeres r5 and r6) at 10 hpf with expression diminishing caudally by 14 hpf. Strongly expressed in adult kidney, gut, liver and swim bladder; weakly expressed in brain, eye, testis, ovary and heart.

The protein resides in the nucleus. Its function is as follows. Transcription factor that binds to the inverted palindrome 5'-GTTAATNATTAAC-3'. Required for induction of rhombomere r5/r6 gene expression in the hindbrain. In Danio rerio (Zebrafish), this protein is Hepatocyte nuclear factor 1-beta-A (hnf1ba).